A 257-amino-acid polypeptide reads, in one-letter code: MAKFNKDSVSGTLTVVVLLSLICSLIVASAAVLLKPTQDIQKQLDKQKNILQAAGLMHENTNVQETYAKFIEPKIVDLATGDYVEDVANFDAKAFAKDPATSVAIKPEDDKANIRMRAKYAEVYLVKDEMGQTTQVVLPMYGNGLWSMMYGFVAVQPDANTVNGITYYEQGETAGLGGEIANPNWQKSFVGKKLFNANNEVALTIGKGASADKEHGVDGLSGATLTSKGVDNSFKYWFGTNGFGPYLAKFKATAGAN.

Residues 13-33 (LTVVVLLSLICSLIVASAAVL) traverse the membrane as a helical segment. The residue at position 224 (Thr-224) is an FMN phosphoryl threonine.

The protein belongs to the NqrC family. As to quaternary structure, composed of six subunits; NqrA, NqrB, NqrC, NqrD, NqrE and NqrF. The cofactor is FMN.

The protein localises to the cell inner membrane. The enzyme catalyses a ubiquinone + n Na(+)(in) + NADH + H(+) = a ubiquinol + n Na(+)(out) + NAD(+). Its function is as follows. NQR complex catalyzes the reduction of ubiquinone-1 to ubiquinol by two successive reactions, coupled with the transport of Na(+) ions from the cytoplasm to the periplasm. NqrA to NqrE are probably involved in the second step, the conversion of ubisemiquinone to ubiquinol. This Haemophilus ducreyi (strain 35000HP / ATCC 700724) protein is Na(+)-translocating NADH-quinone reductase subunit C.